We begin with the raw amino-acid sequence, 198 residues long: Recombination protein RecR (198 aa).

A C4-type zinc finger spans residues 57-72; the sequence is CEKCNTFTEAQICEVC. The region spanning 80 to 175 is the Toprim domain; the sequence is TLLCVVETPA…AVTRLARGVP (96 aa).

It belongs to the RecR family.

In terms of biological role, may play a role in DNA repair. It seems to be involved in an RecBC-independent recombinational process of DNA repair. It may act with RecF and RecO. The sequence is that of Recombination protein RecR from Paraburkholderia xenovorans (strain LB400).